Reading from the N-terminus, the 103-residue chain is Floral defensin-like protein 1 (103 aa).

A signal peptide spans 1–25; the sequence is MARSICFFAVAILALMLFAAYDAEA. Intrachain disulfides connect Cys-28–Cys-72, Cys-32–Cys-48, Cys-39–Cys-59, Cys-45–Cys-66, and Cys-49–Cys-68. Residues 73-103 constitute a propeptide, removed in mature form; sequence VFEKTEATQTETFTKDVNTLAEALLEADMMV.

The protein belongs to the DEFL family. When compared to other plant defensins, the petunia defensins have an additional fifth disulfide bond. As to expression, petals.

It is found in the secreted. Its subcellular location is the vacuole. Functionally, plant defense peptide with antifungal activity against F.oxysporum and B.cinerea. This is Floral defensin-like protein 1 (D1) from Petunia hybrida (Petunia).